Here is a 412-residue protein sequence, read N- to C-terminus: Multifunctional CCA protein (412 aa).

Residues G8 and R11 each coordinate ATP. CTP is bound by residues G8 and R11. Residues D21 and D23 each coordinate Mg(2+). Residues R91, R137, and R140 each contribute to the ATP site. Positions 91, 137, and 140 each coordinate CTP. The HD domain occupies 228–329 (TGIHTMMVLA…LKVFDKADAW (102 aa)).

Belongs to the tRNA nucleotidyltransferase/poly(A) polymerase family. Bacterial CCA-adding enzyme type 1 subfamily. Monomer. Can also form homodimers and oligomers. The cofactor is Mg(2+). Ni(2+) is required as a cofactor.

The catalysed reaction is a tRNA precursor + 2 CTP + ATP = a tRNA with a 3' CCA end + 3 diphosphate. The enzyme catalyses a tRNA with a 3' CCA end + 2 CTP + ATP = a tRNA with a 3' CCACCA end + 3 diphosphate. Its function is as follows. Catalyzes the addition and repair of the essential 3'-terminal CCA sequence in tRNAs without using a nucleic acid template. Adds these three nucleotides in the order of C, C, and A to the tRNA nucleotide-73, using CTP and ATP as substrates and producing inorganic pyrophosphate. tRNA 3'-terminal CCA addition is required both for tRNA processing and repair. Also involved in tRNA surveillance by mediating tandem CCA addition to generate a CCACCA at the 3' terminus of unstable tRNAs. While stable tRNAs receive only 3'-terminal CCA, unstable tRNAs are marked with CCACCA and rapidly degraded. In Aeromonas hydrophila subsp. hydrophila (strain ATCC 7966 / DSM 30187 / BCRC 13018 / CCUG 14551 / JCM 1027 / KCTC 2358 / NCIMB 9240 / NCTC 8049), this protein is Multifunctional CCA protein.